A 108-amino-acid chain; its full sequence is Large ribosomal subunit protein uL23 (108 aa).

It belongs to the universal ribosomal protein uL23 family. Part of the 50S ribosomal subunit. Contacts protein L29, and trigger factor when it is bound to the ribosome.

Its function is as follows. One of the early assembly proteins it binds 23S rRNA. One of the proteins that surrounds the polypeptide exit tunnel on the outside of the ribosome. Forms the main docking site for trigger factor binding to the ribosome. The polypeptide is Large ribosomal subunit protein uL23 (Polaromonas naphthalenivorans (strain CJ2)).